Reading from the N-terminus, the 704-residue chain is Ankyrin repeat and LEM domain-containing protein 1 homolog (704 aa).

A disordered region spans residues 1-29 (MPPNGAITTTPRSRMPPTTPSSGKSRPKK). Residues 8 to 22 (TTTPRSRMPPTTPSS) show a composition bias toward low complexity. 2 ANK repeats span residues 28-59 (KKET…NVNA) and 63-93 (DGAT…PMSA). Disordered regions lie at residues 247–293 (NEDV…SQET), 314–358 (NAGL…ANTT), and 381–421 (SKSA…TTVD). Positions 276–288 (RKQRTPVNHHKRS) are enriched in basic residues. Low complexity-rich tracts occupy residues 329–346 (EPAI…TPKT) and 384–405 (AKSS…SFSS). In terms of domain architecture, LEM spans 425–470 (IRKIRRLREGELKSELKKFGISPAGPLDARTRRLYEKKLLIERRKI). The GIY-YIG domain maps to 525-635 (YNAFCYLIMD…AVKLKNLRNK (111 aa)).

Phosphorylated. Phosphorylated during telophase when localized at the midbody.

It localises to the cytoplasm. The protein resides in the nucleus. The protein localises to the chromosome. It is found in the midbody. Its subcellular location is the cytoskeleton. It localises to the spindle. Its activity is regulated as follows. Inhibited by EDTA. Functionally, endonuclease which, in association with baf-1, plays an essential role during embryogenesis in the DNA repair response following DNA damage probably by ensuring proper chromosome segregation. Also required during postembryonic cell divisions after DNA damage caused by ionizing radiation to ensure normal cell proliferation. Resolves chromatin bridges in late mitosis that result from incomplete DNA replication, defective chromosome condensation or unresolved recombination intermediates. Together with brc-1, contributes to genome integrity by resolving mitotic chromatin bridges that result from incomplete processing of DNA breaks. In parallel to the slx-1/mus-81 pathway, acts in processing early recombination intermediates in meiotic prophase I to prevent illegitimate recombination. Also involved in processing remaining, erroneous recombination intermediates that persist into the second meiotic division. The chain is Ankyrin repeat and LEM domain-containing protein 1 homolog from Caenorhabditis elegans.